The sequence spans 378 residues: Geraniol dehydrogenase (378 aa).

Cys-48, His-75, Cys-105, Cys-108, Cys-111, Cys-119, and Cys-179 together coordinate Zn(2+).

The protein belongs to the zinc-containing alcohol dehydrogenase family. In terms of assembly, monomer. It depends on Zn(2+) as a cofactor.

The enzyme catalyses (2E)-geraniol + NAD(+) = (2E)-geranial + NADH + H(+). It catalyses the reaction (2E,6E)-farnesol + NAD(+) = (2E,6E)-farnesal + NADH + H(+). Functionally, catalyzes the NAD(+)-dependent oxidation of geraniol to geranial, playing an important role in the biosynthesis of neral, an alarm pheromone. Cannot use NADP(+). Also acts as a farnesol dehydrogenase by catalyzing the oxidation of (2E,6E)-farnesol to (2E,6E)-farnesal, with lower activity compared to geraniol dehydrogenase activity. In Carpoglyphus lactis (Dried fruit mite), this protein is Geraniol dehydrogenase.